The sequence spans 211 residues: Large ribosomal subunit protein uL3 (211 aa).

Belongs to the universal ribosomal protein uL3 family. As to quaternary structure, part of the 50S ribosomal subunit. Forms a cluster with proteins L14 and L19.

Functionally, one of the primary rRNA binding proteins, it binds directly near the 3'-end of the 23S rRNA, where it nucleates assembly of the 50S subunit. This is Large ribosomal subunit protein uL3 from Akkermansia muciniphila (strain ATCC BAA-835 / DSM 22959 / JCM 33894 / BCRC 81048 / CCUG 64013 / CIP 107961 / Muc).